We begin with the raw amino-acid sequence, 539 residues long: AT-rich interactive domain-containing protein 3A (539 aa).

Residues 1–190 (MKLQAVMETL…PLSGHPQLQD (190 aa)) are disordered. A compositionally biased stretch (low complexity) spans 55 to 73 (LKIQRAQAAALAAMRAAAA). Residues 84–100 (SEEEDGESMASDEEDEK) are compositionally biased toward acidic residues. Basic and acidic residues predominate over residues 101–110 (ERDGESERYQ). The span at 113–141 (ASEEEDLKGKWDEDDFEDEGEDEYEDMEE) shows a compositional bias: acidic residues. The segment covering 161 to 173 (HSSQQAFPSQRSQ) has biased composition (polar residues). An ARID domain is found at 209–301 (DPKRKEFLDD…YLYPYECEKR (93 aa)). One can recognise an REKLES domain in the interval 404–499 (AALEQLREKL…GVLFAQPPTS (96 aa)). Residues 405–448 (ALEQLREKLESGEPPEKKMALGSEEQQRIIQRTIQHNLLAMTAQ) are important for nuclear localization. The segment at 450–471 (PMNIRINSQAEGRQDSAVNLTT) is homodimerization. Residues 495–502 (QPPTSASG) are important for cytoplasmic localization. The span at 497-512 (PTSASGTSKGSSNRTG) shows a compositional bias: polar residues. Residues 497–539 (PTSASGTSKGSSNRTGSIGGGSSNSQAAPPSTPSAPNSNNPSP) form a disordered region. The span at 519–539 (SNSQAAPPSTPSAPNSNNPSP) shows a compositional bias: low complexity.

Homodimer.

The protein localises to the nucleus. The protein resides in the cytoplasm. Its function is as follows. Transcription factor required for smad1 and smad2-mediated responses to TGFbeta during mesoderm induction. This Xenopus laevis (African clawed frog) protein is AT-rich interactive domain-containing protein 3A (arid3a).